The sequence spans 330 residues: Cathepsin K (330 aa).

A signal peptide spans 1 to 16; that stretch reads MWGLEVLLLLPMASFA. The propeptide at 17-115 is activation peptide; the sequence is LYPEEILDTQ…TLYIPDWESR (99 aa). N-linked (GlcNAc...) asparagine glycosylation occurs at Asn104. Disulfide bonds link Cys137–Cys178, Cys171–Cys211, and Cys270–Cys319. Residue Cys140 is part of the active site. Residues His277 and Asn297 contribute to the active site.

Belongs to the peptidase C1 family.

It is found in the lysosome. Its subcellular location is the secreted. The protein localises to the apical cell membrane. The enzyme catalyses Broad proteolytic activity. With small-molecule substrates and inhibitors, the major determinant of specificity is P2, which is preferably Leu, Met &gt; Phe, and not Arg.. Functionally, thiol protease involved in osteoclastic bone resorption and may participate partially in the disorder of bone remodeling. Displays potent endoprotease activity against fibrinogen at acid pH. May play an important role in extracellular matrix degradation. Involved in the release of thyroid hormone thyroxine (T4) by limited proteolysis of TG/thyroglobulin in the thyroid follicle lumen. The sequence is that of Cathepsin K (CTSK) from Canis lupus familiaris (Dog).